The primary structure comprises 366 residues: Terpene cyclase-like protein flvF (366 aa).

This sequence belongs to the terpene synthase family. In terms of assembly, homodimer.

The enzyme catalyses N,N-dimethyl-cadaverine + 2,6,9-trimethyl-13-oxatetracyclo[6.3.1.1(6,9).0(1,5)]tridecane carbocation = pre-flavunoidine + H(+). Its pathway is secondary metabolite biosynthesis; terpenoid biosynthesis. Terpene cyclase-like protein; part of the gene cluster that mediates the biosynthesis of flavunoidine, an alkaloidal terpenoid with a tetracyclic cage-like core connected to dimethylcadaverine via a C-N bond and acylated with 5,5-dimethyl-L-pipecolate. The tetracyclic core is synthesized by the terpene cyclase flvE and the cytochrome P450 monooxygenase flvD. The terpene cyclase flvE catalyzes the cyclization of farnesyl pyrophosphate (FPP) to form (1R,4R,5S)-(+)-acoradiene and the cytochrome P450 monooxygenase flvD is then responsible for oxidative conversion of (1R,4R,5S)-(+)-acoradiene into the tetracyclic cage present in the final product flavunoidine. In parallel, the N-methyltransferase flvH dimethylates L-lysine to give N,N-dimethyl-L-Lysin which is decarboxylated by flvG to afford dimethylcadaverine. The terpene cyclase-like protein flvF is the enzyme that attaches the dimethylcadaverine precusor at the C-7 of the tetracyclic cage to yield pre-flavunoidine. The cytochrome monooxygenase flvC hydroxylates the C-10 position of pre-flavunoidine whereas the NRPS flvI acylates the terpenoid core at the hydroxylated C-10 with dimethylpipecolate to yield final flavunoidine. The bifunctional enzyme flvA and the dehydrogenase flvB are responsible for the synthesis of the dimethylpipecolate precursor. The PLP-dependent lyase domain of flvA might use L-O-acetyl-homoserine and alpha-keto-isovalerate to form an intermediary ketone that can cyclize intramolecularly to yield an imine. The imine can be reduced by flvB to yield the 6-carboxylated pipecolate. The C-terminal alpha-KG-dependent oxygenase domain of flvA is then proposed to catalyze the decarboxylation to yield dimethylpipecolate. This Aspergillus flavus (strain ATCC 200026 / FGSC A1120 / IAM 13836 / NRRL 3357 / JCM 12722 / SRRC 167) protein is Terpene cyclase-like protein flvF.